We begin with the raw amino-acid sequence, 133 residues long: MNAVQDAQDQLTKLIRCWEPIDSDDLSKGHTMSDPVYQLCSYMPSPKDYNKFHVNGVQMDSDDYTTILTMFANQLPGYAVLNVCLQEAFQFHKANHPSQVSLRCLCQRDGCNLPKTLTDFLDFNKGPIPAVNF.

This is an uncharacterized protein from Caenorhabditis elegans.